Reading from the N-terminus, the 316-residue chain is Bifunctional peptidase and (3S)-lysyl hydroxylase JMJD7 (316 aa).

The region spanning 128–307 (VQKQCSNLPS…LKYSYFQLLD (180 aa)) is the JmjC domain. The Fe cation site is built by His178, Asp180, and His277.

Homodimer; disulfide-linked. Interacts with DRG1 and DRG2. It depends on Fe(2+) as a cofactor.

It is found in the nucleus. The protein localises to the cytoplasm. The enzyme catalyses L-lysyl-[protein] + 2-oxoglutarate + O2 = (3S)-3-hydroxy-L-lysyl-[protein] + succinate + CO2. Bifunctional enzyme that acts both as an endopeptidase and 2-oxoglutarate-dependent monooxygenase. Endopeptidase that cleaves histones N-terminal tails at the carboxyl side of methylated arginine or lysine residues, to generate 'tailless nucleosomes', which may trigger transcription elongation. Preferentially recognizes and cleaves monomethylated and dimethylated arginine residues of histones H2, H3 and H4. After initial cleavage, continues to digest histones tails via its aminopeptidase activity. Additionally, may play a role in protein biosynthesis by modifying the translation machinery. Acts as a Fe(2+) and 2-oxoglutarate-dependent monooxygenase, catalyzing (S)-stereospecific hydroxylation at C-3 of 'Lys-22' of DRG1 and 'Lys-21' of DRG2 translation factors (TRAFAC), promoting their interaction with ribonucleic acids (RNA). The protein is Bifunctional peptidase and (3S)-lysyl hydroxylase JMJD7 of Homo sapiens (Human).